The chain runs to 511 residues: Thioredoxin reductase 2, mitochondrial (511 aa).

The N-terminal 21 residues, M1–G21, are a transit peptide targeting the mitochondrion. FAD is bound at residue D29 to Y58. C74 and C79 are oxidised to a cystine. K316 is subject to N6-succinyllysine. The active-site Proton acceptor is H484. Positions C509–U510 form a cross-link, cysteinyl-selenocysteine (Cys-Sec). Position 510 (U510) is a non-standard amino acid, selenocysteine.

This sequence belongs to the class-I pyridine nucleotide-disulfide oxidoreductase family. As to quaternary structure, homodimer. Requires FAD as cofactor.

It is found in the mitochondrion. It catalyses the reaction [thioredoxin]-dithiol + NADP(+) = [thioredoxin]-disulfide + NADPH + H(+). Its activity is regulated as follows. Inhibited by 1-chloro-2,4-dinitrobenzene and by zinc, calcium, magnesium and Fe(2+) ions. Involved in the control of reactive oxygen species levels and the regulation of mitochondrial redox homeostasis. Maintains thioredoxin in a reduced state. May play a role in redox-regulated cell signaling. The sequence is that of Thioredoxin reductase 2, mitochondrial (TXNRD2) from Bos taurus (Bovine).